Reading from the N-terminus, the 525-residue chain is PE-PGRS family protein PE_PGRS47 (525 aa).

Positions 1 to 93 (MSFVIAAPEF…AYSYASAEAA (93 aa)) constitute a PE domain. The tract at residues 506 to 525 (VGGAGGLLEGQNGENGLLPS) is disordered. Residues 514-525 (EGQNGENGLLPS) show a composition bias toward low complexity.

Belongs to the mycobacterial PE family. PGRS subfamily.

The protein resides in the secreted. Its subcellular location is the cell surface. The protein localises to the host cytoplasm. It localises to the host cytosol. In terms of biological role, contributes to evasion of both innate and adaptive immunity. Inhibits autophagy in infected host phagocytes and inhibits major histocompatibility complex (MHC) class II antigen presentation by mycobacteria-infected dendritic cells. Has an important role in the growth and survival of M.tuberculosis, particularly during intracellular growth and in the later chronic phase of infection. This is PE-PGRS family protein PE_PGRS47 from Mycobacterium tuberculosis (strain ATCC 25618 / H37Rv).